Consider the following 100-residue polypeptide: Large ribosomal subunit protein uL23 (100 aa).

It belongs to the universal ribosomal protein uL23 family. In terms of assembly, part of the 50S ribosomal subunit. Contacts protein L29, and trigger factor when it is bound to the ribosome.

Functionally, one of the early assembly proteins it binds 23S rRNA. One of the proteins that surrounds the polypeptide exit tunnel on the outside of the ribosome. Forms the main docking site for trigger factor binding to the ribosome. This is Large ribosomal subunit protein uL23 from Shewanella amazonensis (strain ATCC BAA-1098 / SB2B).